The primary structure comprises 387 residues: 1-deoxy-D-xylulose 5-phosphate reductoisomerase (387 aa).

NADPH is bound by residues Thr-10, Gly-11, Ile-13, Asn-38, and Asn-122. Lys-123 contributes to the 1-deoxy-D-xylulose 5-phosphate binding site. Glu-124 is a binding site for NADPH. Mn(2+) is bound at residue Asp-148. 4 residues coordinate 1-deoxy-D-xylulose 5-phosphate: Ser-149, Glu-150, Ser-174, and His-197. Glu-150 is a binding site for Mn(2+). Gly-203 is a binding site for NADPH. 4 residues coordinate 1-deoxy-D-xylulose 5-phosphate: Ser-210, Asn-215, Lys-216, and Glu-219. Glu-219 is a Mn(2+) binding site.

This sequence belongs to the DXR family. It depends on Mg(2+) as a cofactor. Requires Mn(2+) as cofactor.

The enzyme catalyses 2-C-methyl-D-erythritol 4-phosphate + NADP(+) = 1-deoxy-D-xylulose 5-phosphate + NADPH + H(+). It participates in isoprenoid biosynthesis; isopentenyl diphosphate biosynthesis via DXP pathway; isopentenyl diphosphate from 1-deoxy-D-xylulose 5-phosphate: step 1/6. Functionally, catalyzes the NADPH-dependent rearrangement and reduction of 1-deoxy-D-xylulose-5-phosphate (DXP) to 2-C-methyl-D-erythritol 4-phosphate (MEP). The protein is 1-deoxy-D-xylulose 5-phosphate reductoisomerase of Ehrlichia canis (strain Jake).